A 359-amino-acid polypeptide reads, in one-letter code: Fructose-bisphosphate aldolase class 2 (359 aa).

A D-glyceraldehyde 3-phosphate-binding site is contributed by Ser-61. The Proton donor role is filled by Asp-110. Residues His-111, Asp-145, Glu-175, and His-227 each contribute to the Zn(2+) site. Gly-228 contributes to the dihydroxyacetone phosphate binding site. His-265 is a binding site for Zn(2+). Residues 266-268 (GGS) and 287-290 (NIDT) each bind dihydroxyacetone phosphate.

It belongs to the class II fructose-bisphosphate aldolase family. It depends on Zn(2+) as a cofactor.

It carries out the reaction beta-D-fructose 1,6-bisphosphate = D-glyceraldehyde 3-phosphate + dihydroxyacetone phosphate. It functions in the pathway carbohydrate degradation; glycolysis; D-glyceraldehyde 3-phosphate and glycerone phosphate from D-glucose: step 4/4. In terms of biological role, catalyzes the aldol condensation of dihydroxyacetone phosphate (DHAP or glycerone-phosphate) with glyceraldehyde 3-phosphate (G3P) to form fructose 1,6-bisphosphate (FBP) in gluconeogenesis and the reverse reaction in glycolysis. The sequence is that of Fructose-bisphosphate aldolase class 2 (fbaA) from Buchnera aphidicola subsp. Schizaphis graminum (strain Sg).